Reading from the N-terminus, the 134-residue chain is Methylglyoxal synthase (134 aa).

Residues 1–134 (MKIALIAHDR…DWRLIQERRN (134 aa)) form the MGS-like domain. Substrate-binding positions include histidine 8, lysine 12, 34–37 (TGTT), and 54–55 (SG). Aspartate 60 acts as the Proton donor/acceptor in catalysis. Position 87 (histidine 87) interacts with substrate.

This sequence belongs to the methylglyoxal synthase family.

The catalysed reaction is dihydroxyacetone phosphate = methylglyoxal + phosphate. Its function is as follows. Catalyzes the formation of methylglyoxal from dihydroxyacetone phosphate. The polypeptide is Methylglyoxal synthase (Lysinibacillus sphaericus (strain C3-41)).